The primary structure comprises 335 residues: Fructose-1,6-bisphosphatase class 1 (335 aa).

Glu90, Asp113, Leu115, and Asp116 together coordinate Mg(2+). Substrate-binding positions include 116 to 119, Asn209, Tyr242, and Lys272; that span reads DGSS. Glu278 is a Mg(2+) binding site.

Belongs to the FBPase class 1 family. As to quaternary structure, homotetramer. Requires Mg(2+) as cofactor.

It localises to the cytoplasm. The catalysed reaction is beta-D-fructose 1,6-bisphosphate + H2O = beta-D-fructose 6-phosphate + phosphate. Its pathway is carbohydrate biosynthesis; gluconeogenesis. The protein is Fructose-1,6-bisphosphatase class 1 of Histophilus somni (strain 2336) (Haemophilus somnus).